Here is a 277-residue protein sequence, read N- to C-terminus: F420-dependent methylenetetrahydromethanopterin dehydrogenase (277 aa).

This sequence belongs to the MTD family.

The enzyme catalyses 5,10-methylenetetrahydromethanopterin + oxidized coenzyme F420-(gamma-L-Glu)(n) + 2 H(+) = 5,10-methenyl-5,6,7,8-tetrahydromethanopterin + reduced coenzyme F420-(gamma-L-Glu)(n). The protein operates within one-carbon metabolism; methanogenesis from CO(2); 5,10-methylene-5,6,7,8-tetrahydromethanopterin from 5,10-methenyl-5,6,7,8-tetrahydromethanopterin (coenzyme F420 route): step 1/1. Catalyzes the reversible reduction of methenyl-H(4)MPT(+) to methylene-H(4)MPT. The chain is F420-dependent methylenetetrahydromethanopterin dehydrogenase from Methanococcus maripaludis (strain DSM 14266 / JCM 13030 / NBRC 101832 / S2 / LL).